We begin with the raw amino-acid sequence, 440 residues long: Probable pectate lyase 10 (440 aa).

Positions 1-28 (MVIFSRSFLALSTTLIILALCINSSTMA) are cleaved as a signal peptide. The tract at residues 32–56 (EDLNSHSSSNSSTANKLPNDDGAWN) is disordered. 2 N-linked (GlcNAc...) asparagine glycosylation sites follow: asparagine 41 and asparagine 76. Ca(2+)-binding residues include aspartate 238, aspartate 262, and aspartate 266. Arginine 318 is an active-site residue.

Belongs to the polysaccharide lyase 1 family. Ca(2+) serves as cofactor.

The catalysed reaction is Eliminative cleavage of (1-&gt;4)-alpha-D-galacturonan to give oligosaccharides with 4-deoxy-alpha-D-galact-4-enuronosyl groups at their non-reducing ends.. Its pathway is glycan metabolism; pectin degradation; 2-dehydro-3-deoxy-D-gluconate from pectin: step 2/5. This chain is Probable pectate lyase 10, found in Arabidopsis thaliana (Mouse-ear cress).